The sequence spans 346 residues: Nitrilase 3 (346 aa).

S2 carries the N-acetylserine modification. The 273-residue stretch at 25-297 (VRVTIVQSST…EGLVTADLDL (273 aa)) folds into the CN hydrolase domain. The active-site Proton acceptor is the E65. The Proton donor role is filled by K152. C186 acts as the Nucleophile in catalysis.

It belongs to the carbon-nitrogen hydrolase superfamily. Nitrilase family.

It localises to the cell membrane. The catalysed reaction is a nitrile + 2 H2O = a carboxylate + NH4(+). Functionally, can convert indole-3-acetonitrile to the plant hormone indole-3-acetic acid. The chain is Nitrilase 3 (NIT3) from Arabidopsis thaliana (Mouse-ear cress).